The following is a 96-amino-acid chain: MDGQPITGGVHPTENLNAEHHDFIKAALNETGTHAGRKYKVLRSSQQVVAGMKYTFYIVFEDDESGQEYKITAWSRPWLQDKGEALKLTFDKHEPK.

One can recognise a Cystatin domain in the interval 22–65; that stretch reads DFIKAALNETGTHAGRKYKVLRSSQQVVAGMKYTFYIVFEDDES. Asn29 is a glycosylation site (N-linked (GlcNAc...) asparagine).

Belongs to the cystatin family. Interacts with cathepsin L-like peptidase; the interaction results in inhibition of cathepsin L-like peptidase activity. Salivary gland. Midgut.

Its function is as follows. Cysteine proteinase inhibitor. Inhibits cathepsin L-like peptidase. Increases cell viability following apoptosis induction by staurosporine. Inhibits human cathepsin S (CTSS), human cathepsin L2 (CTSV), human cathepsin L (CTSL), human cathepsin B (CTSB) and papain. Functionally, (Microbial infection) Modulates dengue virus type 2 replication in salivary glands. The protein is Cystatin of Aedes aegypti (Yellowfever mosquito).